The primary structure comprises 309 residues: 2-phospho-L-lactate transferase (309 aa).

Asp50 and Lys89 together coordinate 7,8-didemethyl-8-hydroxy-5-deazariboflavin.

Belongs to the CofD family. In terms of assembly, homodimer. Mg(2+) is required as a cofactor.

The catalysed reaction is (2S)-lactyl-2-diphospho-5'-guanosine + 7,8-didemethyl-8-hydroxy-5-deazariboflavin = oxidized coenzyme F420-0 + GMP + H(+). The protein operates within cofactor biosynthesis; coenzyme F420 biosynthesis. In terms of biological role, catalyzes the transfer of the 2-phospholactate moiety from (2S)-lactyl-2-diphospho-5'-guanosine to 7,8-didemethyl-8-hydroxy-5-deazariboflavin (FO) with the formation of oxidized coenzyme F420-0 and GMP. The chain is 2-phospho-L-lactate transferase from Methanococcus maripaludis (strain C7 / ATCC BAA-1331).